A 429-amino-acid chain; its full sequence is SH2 domain-containing protein 5 (429 aa).

One can recognise an SH2 domain in the interval 302–398 (WAFAGLSRSC…LSMGRLNPTY (97 aa)).

In terms of assembly, interacts with BCR. In terms of tissue distribution, highly expressed in brain, particularly in Purkinjie cells in the cerebellum and the cornu ammonis of the hippocampus.

Its subcellular location is the postsynaptic density. Functionally, may be involved in synaptic plasticity regulation through the control of Rac-GTP levels. The sequence is that of SH2 domain-containing protein 5 from Mus musculus (Mouse).